A 310-amino-acid polypeptide reads, in one-letter code: MKVGIVGSGMVGSATAYALALLGVAREVVLVDLDRKLAQAHAEDILHATPFAHPVWVRAGSYGDLEGARAVVLAAGVAQRPGETRLQLLDRNAQVFAQVVPRVLEAAPEAVLLVATNPVDVMTQVAYRLSALPPGRVVGSGTILDTARFRALLAEHLRVAPQSVHAYVLGEHGDSEVLVWSSAQVGGVPLLEFAEARGRALSPEDRARIDEGVRRAAYRIIEGKGATYYGIGAGLARLVRAILTDEKGVYTVSAFTPEVEGVLEVSLSLPRILGAGGVEGTVYPSLSPEEREALRRSAEILKEAAFALGF.

NAD(+) contacts are provided by residues 10 to 11, Asp32, Tyr62, and 76 to 77; these read MV and GV. Residues Gln79, Arg85, and 117 to 120 contribute to the substrate site; that span reads NPVD. NAD(+) is bound by residues 115–117 and Ser140; that span reads ATN. 145–148 serves as a coordination point for substrate; it reads DTAR. Residues Arg150 and 162 to 167 each bind beta-D-fructose 1,6-bisphosphate; that span reads QSVHAY. Catalysis depends on His172, which acts as the Proton acceptor. Phosphotyrosine is present on Tyr218. Position 227 (Thr227) interacts with substrate.

Belongs to the LDH/MDH superfamily. LDH family. In terms of assembly, homotetramer.

It localises to the cytoplasm. It catalyses the reaction (S)-lactate + NAD(+) = pyruvate + NADH + H(+). Its pathway is fermentation; pyruvate fermentation to lactate; (S)-lactate from pyruvate: step 1/1. Its activity is regulated as follows. Allosterically activated by fructose 1,6-bisphosphate (FBP). It binds two fructose 1,6-bisphosphate (FBP) molecules per tetramer. In terms of biological role, catalyzes the conversion of lactate to pyruvate. This is L-lactate dehydrogenase from Thermus caldophilus.